Here is a 57-residue protein sequence, read N- to C-terminus: Enolase (57 aa).

The active-site Proton donor is the Glu25.

This sequence belongs to the enolase family. The cofactor is Mg(2+).

The protein localises to the cytoplasm. It localises to the secreted. Its subcellular location is the cell surface. It catalyses the reaction (2R)-2-phosphoglycerate = phosphoenolpyruvate + H2O. It functions in the pathway carbohydrate degradation; glycolysis; pyruvate from D-glyceraldehyde 3-phosphate: step 4/5. In terms of biological role, catalyzes the reversible conversion of 2-phosphoglycerate (2-PG) into phosphoenolpyruvate (PEP). It is essential for the degradation of carbohydrates via glycolysis. The protein is Enolase of Clostridioides difficile (Peptoclostridium difficile).